We begin with the raw amino-acid sequence, 442 residues long: Exodeoxyribonuclease 7 large subunit (442 aa).

It belongs to the XseA family. As to quaternary structure, heterooligomer composed of large and small subunits.

The protein resides in the cytoplasm. It carries out the reaction Exonucleolytic cleavage in either 5'- to 3'- or 3'- to 5'-direction to yield nucleoside 5'-phosphates.. Bidirectionally degrades single-stranded DNA into large acid-insoluble oligonucleotides, which are then degraded further into small acid-soluble oligonucleotides. This chain is Exodeoxyribonuclease 7 large subunit, found in Shewanella loihica (strain ATCC BAA-1088 / PV-4).